Consider the following 724-residue polypeptide: Phenylalanine ammonia-lyase (724 aa).

Tyr-91 (proton donor/acceptor) is an active-site residue. The segment at residues Ala-205 to Gly-207 is a cross-link (5-imidazolinone (Ala-Gly)). Ser-206 is modified (2,3-didehydroalanine (Ser)). (E)-cinnamate is bound by residues Asn-265, Gln-357, Arg-363, Asn-393, Lys-467, Glu-495, and Asn-498.

Belongs to the PAL/histidase family. In terms of assembly, homotetramer. In terms of processing, contains an active site 4-methylidene-imidazol-5-one (MIO), which is formed autocatalytically by cyclization and dehydration of residues Ala-Ser-Gly.

It is found in the cytoplasm. The catalysed reaction is L-phenylalanine = (E)-cinnamate + NH4(+). It participates in phenylpropanoid metabolism; trans-cinnamate biosynthesis; trans-cinnamate from L-phenylalanine: step 1/1. Catalyzes the non-oxidative deamination of L-phenylalanine to form trans-cinnamic acid and a free ammonium ion. Facilitates the commitment step in phenylpropanoid pathways that produce secondary metabolites such as lignins, coumarins and flavonoids. In Mycosarcoma maydis (Corn smut fungus), this protein is Phenylalanine ammonia-lyase (PAL1).